The following is a 388-amino-acid chain: Formate-dependent phosphoribosylglycinamide formyltransferase (388 aa).

Residues 20–21 (EL) and Glu80 each bind N(1)-(5-phospho-beta-D-ribosyl)glycinamide. Residues Arg112, Lys153, 158 to 163 (SSGKGQ), 193 to 196 (EEFV), and Glu201 contribute to the ATP site. Positions 117–306 (RLASEKLGLR…EFEIHVRSIL (190 aa)) constitute an ATP-grasp domain. Glu265 and Glu277 together coordinate Mg(2+). Residues Asp284, Lys352, and 359-360 (RR) each bind N(1)-(5-phospho-beta-D-ribosyl)glycinamide.

The protein belongs to the PurK/PurT family. In terms of assembly, homodimer.

The enzyme catalyses N(1)-(5-phospho-beta-D-ribosyl)glycinamide + formate + ATP = N(2)-formyl-N(1)-(5-phospho-beta-D-ribosyl)glycinamide + ADP + phosphate + H(+). The protein operates within purine metabolism; IMP biosynthesis via de novo pathway; N(2)-formyl-N(1)-(5-phospho-D-ribosyl)glycinamide from N(1)-(5-phospho-D-ribosyl)glycinamide (formate route): step 1/1. In terms of biological role, involved in the de novo purine biosynthesis. Catalyzes the transfer of formate to 5-phospho-ribosyl-glycinamide (GAR), producing 5-phospho-ribosyl-N-formylglycinamide (FGAR). Formate is provided by PurU via hydrolysis of 10-formyl-tetrahydrofolate. The chain is Formate-dependent phosphoribosylglycinamide formyltransferase from Methanococcus vannielii (strain ATCC 35089 / DSM 1224 / JCM 13029 / OCM 148 / SB).